An 821-amino-acid polypeptide reads, in one-letter code: Enhancer of polycomb-like protein 1 (821 aa).

Residues 1 to 12 (MSSNGGSNTNER) are compositionally biased toward polar residues. 3 disordered regions span residues 1-43 (MSSN…TRFR), 427-485 (KAAA…QPAM), and 779-799 (QFLQ…PINP). Low complexity-rich tracts occupy residues 18 to 39 (SGSL…DSGS) and 449 to 465 (EQAA…SSSQ). Residues 786–799 (ENGSPNNATMPINP) are compositionally biased toward polar residues.

The protein belongs to the enhancer of polycomb family. Component of the NuA4 histone acetyltransferase complex.

The protein localises to the nucleus. Functionally, component of the NuA4 histone acetyltransferase complex which is involved in transcriptional activation of selected genes principally by acetylation of nucleosomal histone H4 and H2A. The NuA4 complex is also involved in DNA repair. Involved in gene silencing by neighboring heterochromatin, blockage of the silencing spreading along the chromosome, and required for cell cycle progression through G2/M. The sequence is that of Enhancer of polycomb-like protein 1 (EPL1) from Candida glabrata (strain ATCC 2001 / BCRC 20586 / JCM 3761 / NBRC 0622 / NRRL Y-65 / CBS 138) (Yeast).